The primary structure comprises 180 residues: uncharacterized protein (180 aa).

Residues 35–163 (LRHRATYIVV…TPDSLKALAL (129 aa)) enclose the Nudix hydrolase domain. The Nudix box motif lies at 72–94 (GGVVQADEQLLESARREAEEELG). Mg(2+)-binding residues include E88 and E92.

This sequence belongs to the Nudix hydrolase family. Mg(2+) serves as cofactor.

This is an uncharacterized protein from Shigella flexneri.